We begin with the raw amino-acid sequence, 106 residues long: MSTAIAQQKIRIRLKAFDRRMLDLSCDKIIETADHTAATAIGPIPLPTKRKIYCVLRSPHVDKDSREHFETRTHRRLIDIFNPSSKTIDALMKLDLPSGVDIEVKL.

The protein belongs to the universal ribosomal protein uS10 family. Part of the 30S ribosomal subunit.

Functionally, involved in the binding of tRNA to the ribosomes. This is Small ribosomal subunit protein uS10 from Synechococcus sp. (strain RCC307).